Here is a 90-residue protein sequence, read N- to C-terminus: MANIASAQKRIRQTLVRTARNKARRSRVHSFIRKVEEAIATGNHIEARTAFIAAQPELQRAVTKGVLKANTASRKLSRLSARVKALSASA.

It belongs to the bacterial ribosomal protein bS20 family.

In terms of biological role, binds directly to 16S ribosomal RNA. This Acidiphilium cryptum (strain JF-5) protein is Small ribosomal subunit protein bS20.